We begin with the raw amino-acid sequence, 600 residues long: Lamin-B2 (600 aa).

A head region spans residues 2-27; that stretch reads SGTPIRGTPGGTPLSPTRISRLQEKE. Phosphoserine; by CDK1 is present on Ser16. The IF rod domain maps to 25 to 381; it reads EKEELRQLND…KLLEGEEERL (357 aa). Residues 28-64 form a coil 1A region; that stretch reads ELRQLNDRLAVYIDRVRALELENDRLLVKISEKEEVT. A coil 1B region spans residues 75–212; sequence YESELADARR…NVFEEEIRET (138 aa). The coil 2 stretch occupies residues 237-379; that stretch reads QALEDLRNQH…YRKLLEGEEE (143 aa). 2 disordered regions span residues 377 to 449 and 568 to 600; these read EEER…QMSQ and ENEEEEDEADFGEEDLFNQQGDPRTTSRGCLVM. Residues 380 to 600 form a tail region; it reads RLKLSPSPSS…RTTSRGCLVM (221 aa). Over residues 383 to 410 the composition is skewed to low complexity; the sequence is LSPSPSSRVTVSRATSSSSSSSTSLVRS. Ser386 is subject to Phosphoserine. The short motif at 414–419 is the Nuclear localization signal element; sequence KRRRIE. The LTD domain occupies 445-562; it reads FQMSQQASAT…EEVAVRTVTK (118 aa). The span at 569 to 583 shows a compositional bias: acidic residues; it reads NEEEEDEADFGEEDL. The segment covering 584–600 has biased composition (polar residues); sequence FNQQGDPRTTSRGCLVM. At Cys597 the chain carries Cysteine methyl ester. Cys597 is lipidated: S-farnesyl cysteine. A propeptide spans 598 to 600 (removed in mature form); it reads LVM.

Belongs to the intermediate filament family. In terms of assembly, homodimer. Lamin dimers then assemble into dimeric head-to-tail polymers. Ultimately, two head-to-tail polymers assemble laterally into a protofilament with a uniformly shaped rod of 3.5 nm in diameter. In terms of processing, phosphorylation plays a key role in lamin organization, subcellular localization and nuclear envelope disintegration. Phosphorylation by CDK1 at Ser-16 at the onset of mitosis drives lamin disassembly and nuclear envelope breakdown.

It localises to the nucleus lamina. It is found in the nucleus envelope. The protein resides in the nucleus. The protein localises to the nucleoplasm. Its subcellular location is the nucleus matrix. Functionally, lamins are intermediate filament proteins that assemble into a filamentous meshwork, and which constitute the major components of the nuclear lamina, a fibrous layer on the nucleoplasmic side of the inner nuclear membrane. Lamins provide a framework for the nuclear envelope, bridging the nuclear envelope and chromatin. Plays an important role in nuclear assembly, chromatin organization, nuclear membrane and telomere dynamics. This chain is Lamin-B2 (LMNB2), found in Gallus gallus (Chicken).